The following is a 552-amino-acid chain: Olefin beta-lactone synthetase (552 aa).

ATP contacts are provided by residues 182-190, 316-321, aspartate 425, and arginine 440; these read TSGSTGVPK and TPYGAT.

It belongs to the ATP-dependent AMP-binding enzyme family. In terms of assembly, monomer.

The enzyme catalyses a (2R,3S)-2-alkyl-3-hydroxyalkanoate + ATP = a cis-3-alkyl-4-alkyloxetan-2-one + AMP + diphosphate. Functionally, involved in olefin biosynthesis. Catalyzes the conversion of beta-hydroxy acid substrates to beta-lactones in the presence of ATP. Can use all four stereoisomers of 2-hexyl-3-hydroxydecanoic acid. The chain is Olefin beta-lactone synthetase from Stenotrophomonas maltophilia (strain K279a).